An 804-amino-acid polypeptide reads, in one-letter code: DNA gyrase subunit A (804 aa).

In terms of domain architecture, Topo IIA-type catalytic spans 31 to 495 (IPDVRDGLKP…QSIEYNEEEL (465 aa)). Catalysis depends on Tyr-119, which acts as the O-(5'-phospho-DNA)-tyrosine intermediate. The short motif at 522–528 (QKRGGKG) is the GyrA-box element.

It belongs to the type II topoisomerase GyrA/ParC subunit family. As to quaternary structure, heterotetramer, composed of two GyrA and two GyrB chains. In the heterotetramer, GyrA contains the active site tyrosine that forms a transient covalent intermediate with DNA, while GyrB binds cofactors and catalyzes ATP hydrolysis.

It is found in the cytoplasm. It catalyses the reaction ATP-dependent breakage, passage and rejoining of double-stranded DNA.. Its function is as follows. A type II topoisomerase that negatively supercoils closed circular double-stranded (ds) DNA in an ATP-dependent manner to modulate DNA topology and maintain chromosomes in an underwound state. Negative supercoiling favors strand separation, and DNA replication, transcription, recombination and repair, all of which involve strand separation. Also able to catalyze the interconversion of other topological isomers of dsDNA rings, including catenanes and knotted rings. Type II topoisomerases break and join 2 DNA strands simultaneously in an ATP-dependent manner. The protein is DNA gyrase subunit A of Thermotoga maritima (strain ATCC 43589 / DSM 3109 / JCM 10099 / NBRC 100826 / MSB8).